The primary structure comprises 201 residues: Pyridoxal 5'-phosphate synthase subunit PdxT (201 aa).

An L-glutamine-binding site is contributed by 48–50 (GES). C80 acts as the Nucleophile in catalysis. L-glutamine-binding positions include R109 and 137–138 (IR). Residues H180 and E182 each act as charge relay system in the active site.

Belongs to the glutaminase PdxT/SNO family. In terms of assembly, in the presence of PdxS, forms a dodecamer of heterodimers. Only shows activity in the heterodimer.

The catalysed reaction is aldehydo-D-ribose 5-phosphate + D-glyceraldehyde 3-phosphate + L-glutamine = pyridoxal 5'-phosphate + L-glutamate + phosphate + 3 H2O + H(+). It catalyses the reaction L-glutamine + H2O = L-glutamate + NH4(+). It participates in cofactor biosynthesis; pyridoxal 5'-phosphate biosynthesis. Functionally, catalyzes the hydrolysis of glutamine to glutamate and ammonia as part of the biosynthesis of pyridoxal 5'-phosphate. The resulting ammonia molecule is channeled to the active site of PdxS. This chain is Pyridoxal 5'-phosphate synthase subunit PdxT, found in Cutibacterium acnes (strain DSM 16379 / KPA171202) (Propionibacterium acnes).